Reading from the N-terminus, the 545-residue chain is Cannabidiolic acid synthase-like 2 (545 aa).

Residues 1 to 28 (MKCSTFCFWYVCKIIFFFLSFNIQISIA) form the signal peptide. An intrachain disulfide couples Cys-37 to Cys-99. N-linked (GlcNAc...) asparagine glycans are attached at residues Asn-45, Asn-65, Asn-89, and Asn-168. The FAD-binding PCMH-type domain maps to 77-251 (TTPKPLVITT…AAWKIRLVAV (175 aa)). The 6-(S-cysteinyl)-8alpha-(pros-histidyl)-FAD (His-Cys) cross-link spans 114–176 (HDAEGMSYIS…ENLSFPAGYC (63 aa)). His-292 contacts substrate. Residues Asn-297, Asn-305, Asn-329, and Asn-361 are each glycosylated (N-linked (GlcNAc...) asparagine). Residue Tyr-417 coordinates substrate. N-linked (GlcNAc...) asparagine glycosylation is present at Asn-467. The active-site Proton acceptor is the Tyr-484. N-linked (GlcNAc...) asparagine glycosylation is present at Asn-499.

It belongs to the oxygen-dependent FAD-linked oxidoreductase family. FAD is required as a cofactor. In terms of processing, the FAD cofactor is bound via a bicovalent 6-S-cysteinyl, 8alpha-N1-histidyl FAD linkage.

Its subcellular location is the secreted. In terms of biological role, has no cannabidiolic acid synthase activity. The protein is Cannabidiolic acid synthase-like 2 (CBDAS3) of Cannabis sativa (Hemp).